The sequence spans 626 residues: MKSYKLNNPNLLISTHTHNKLFLSSSPFNLLFSFPSFIYLKQQRSLFFFFFFFLCFSFTTSMLDSDTDTDSGPVVATTKLVTFLQRVQHTALRSYPKKQTPDPKSYIDLSLKRPYSLSTIESAFDDLTSESHDQPVPVETLEKFVKEYFDGAGEDLLHHEPVDFVSDPSGFLSNVENEEVREWAREVHGLWRNLSCRVSDSVRESADRHTLLPLPEPVIIPGSRFREVYYWDSYWVIKGLMTSQMFTTAKGLVTNLMSLVETYGYALNGARAYYTNRSQPPLLSSMVYEIYNVTKDEELVRKAIPLLLKEYEFWNSGKHKVVIRDANGYDHVLSRYYAMWNKPRPESSVFDEESASGFSTMLEKQRFHRDIATAAESGCDFSTRWMRDPPNFTTMATTSVVPVDLNVFLLKMELDIAFMMKVSGDQNGSDRFVKASKAREKAFQTVFWNEKAGQWLDYWLSSSGEESETWKAENQNTNVFASNFAPIWINSINSDENLVKKVVTALKNSGLIAPAGILTSLTNSGQQWDSPNGWAPQQEMIVTGLGRSSVKEAKEMAEDIARRWIKSNYLVYKKSGTIHEKLKVTELGEYGGGGEYMPQTGFGWSNGVILAFLEEYGWPSHLSIEA.

Helical transmembrane passes span 20–40 and 45–65; these read KLFL…FIYL and SLFF…MLDS. Arginine 224, aspartate 232, asparagine 268, arginine 277, glutamine 279, arginine 344, and glutamate 346 together coordinate alpha,alpha-trehalose. Active-site proton donor/acceptor residues include aspartate 380 and glutamate 580. The alpha,alpha-trehalose site is built by glutamate 580 and glutamate 595.

The protein belongs to the glycosyl hydrolase 37 family. As to quaternary structure, forms homodimers. Highly expressed in flowers. Expressed at low levels in leaves and stems. Expressed in guard cells.

The protein resides in the cell membrane. It is found in the cytoplasm. The protein localises to the nucleus. The catalysed reaction is alpha,alpha-trehalose + H2O = alpha-D-glucose + beta-D-glucose. Involved in the regulation of trehalose content by hydrolyzing trehalose to glucose. May play a role in the regulation of abscisic acid-induced stomatal closure in response to drought stress. This is Trehalase (TRE1) from Arabidopsis thaliana (Mouse-ear cress).